The sequence spans 274 residues: 2,3,4,5-tetrahydropyridine-2,6-dicarboxylate N-succinyltransferase (274 aa).

This sequence belongs to the transferase hexapeptide repeat family.

It localises to the cytoplasm. The enzyme catalyses (S)-2,3,4,5-tetrahydrodipicolinate + succinyl-CoA + H2O = (S)-2-succinylamino-6-oxoheptanedioate + CoA. It functions in the pathway amino-acid biosynthesis; L-lysine biosynthesis via DAP pathway; LL-2,6-diaminopimelate from (S)-tetrahydrodipicolinate (succinylase route): step 1/3. The sequence is that of 2,3,4,5-tetrahydropyridine-2,6-dicarboxylate N-succinyltransferase from Escherichia fergusonii (strain ATCC 35469 / DSM 13698 / CCUG 18766 / IAM 14443 / JCM 21226 / LMG 7866 / NBRC 102419 / NCTC 12128 / CDC 0568-73).